The sequence spans 182 residues: Signal peptidase I (182 aa).

The Cytoplasmic segment spans residues 1–13 (MTKQKEKRGRRWP). The chain crosses the membrane as a helical span at residues 14-30 (WFVAVCVVATLRLFVFS). Residues 31-182 (NYVVEGKSMM…WPFKQFAFQF (152 aa)) lie on the Extracellular side of the membrane. Active-site residues include Ser38 and Lys79.

It belongs to the peptidase S26 family.

The protein resides in the cell membrane. The enzyme catalyses Cleavage of hydrophobic, N-terminal signal or leader sequences from secreted and periplasmic proteins.. In Bacillus caldolyticus, this protein is Signal peptidase I (lepB).